Consider the following 471-residue polypeptide: Anthocyanidin 3-O-glucosyltransferase (471 aa).

Catalysis depends on His-24, which acts as the Proton acceptor. An an anthocyanidin-binding site is contributed by His-24. The active-site Charge relay is Asp-130. A UDP-alpha-D-glucose-binding site is contributed by Thr-152. Residue His-161 coordinates an anthocyanidin. Positions 352, 354, 369, 372, 374, and 377 each coordinate UDP-alpha-D-glucose. Position 392 (Gly-392) interacts with an anthocyanidin. Positions 393 and 394 each coordinate UDP-alpha-D-glucose.

Belongs to the UDP-glycosyltransferase family.

The catalysed reaction is an anthocyanidin + UDP-alpha-D-glucose + H(+) = an anthocyanidin 3-O-beta-D-glucoside + UDP. It functions in the pathway pigment biosynthesis; anthocyanin biosynthesis. In the presence of other necessary color factors, this glycosylation reaction allows the accumulation of anthocyanin pigments. This chain is Anthocyanidin 3-O-glucosyltransferase (BZ1), found in Zea mays (Maize).